The primary structure comprises 261 residues: 5-oxoprolinase subunit A (261 aa).

This sequence belongs to the LamB/PxpA family. In terms of assembly, forms a complex composed of PxpA, PxpB and PxpC.

It catalyses the reaction 5-oxo-L-proline + ATP + 2 H2O = L-glutamate + ADP + phosphate + H(+). Catalyzes the cleavage of 5-oxoproline to form L-glutamate coupled to the hydrolysis of ATP to ADP and inorganic phosphate. The polypeptide is 5-oxoprolinase subunit A (Symbiobacterium thermophilum (strain DSM 24528 / JCM 14929 / IAM 14863 / T)).